Reading from the N-terminus, the 757-residue chain is Cellulose synthase-like protein B1 (757 aa).

2 helical membrane passes run 18-38 and 50-70; these read TNYF…SLLL and VWLV…LITC. Residue aspartate 136 is part of the active site. A coiled-coil region spans residues 186–216; the sequence is EFNRDWEKTKREYEKLRRKVEDATGDSHMLD. Aspartate 462 is an active-site residue. 6 consecutive transmembrane segments (helical) span residues 533–553, 569–589, 615–635, 674–694, 710–730, and 737–757; these read LAYL…YCLL, LYLG…LWEF, LFSI…VFII, FLPG…FSVG, AEAC…MGLF, and TPLS…VFSV.

Belongs to the glycosyltransferase 2 family. Plant cellulose synthase-like B subfamily. Expressed in young seedlings, primarily in the vascular tissue.

It is found in the golgi apparatus membrane. In terms of biological role, thought to be a Golgi-localized beta-glycan synthase that polymerize the backbones of noncellulosic polysaccharides (hemicelluloses) of plant cell wall. The sequence is that of Cellulose synthase-like protein B1 (CSLB1) from Arabidopsis thaliana (Mouse-ear cress).